The following is a 625-amino-acid chain: Ankyrin repeat domain-containing protein oryK (625 aa).

ANK repeat units follow at residues 1 to 27 (MDIYEAASQGRIDAIKFAVEQGCDVDG), 31 to 60 (DGKTPLWFAVQSGQPEACRFLMSLGAGRGP), 62 to 89 (NPSLLEVAVGGGYADIVALLWPHCNAER), 90 to 119 (EHRSLKTAISLGFHEIADFLIETGAFEYQD), 162 to 195 (FFDYALLLATKAGRNAGLRLVEFLLGESMPDVNC), 202 to 232 (QFETPLTAAAEKGNLEILATLIDHPNIDLTI), 500 to 530 (DTRCPLSWAAKSHNAPLVNALLRSPQVNVNF), 534 to 562 (SDRTPLLYAIAVNDRPIVERLLNHRDIDL), and 568 to 598 (EGRTAIFYAAQGGDLSIVQLLIGTQNVDFSI).

It functions in the pathway secondary metabolite biosynthesis. Ankyrin repeat domain-containing protein; part of the gene cluster that mediates the biosynthesis of oryzines, natural products with an unusual maleidride backbone. The two subunits of the fungal fatty acid synthase oryfasA and oryfasB probably form octenoic acid. This fatty acid is most likely activated by the acyl-CoA ligase oryP to give octenyl-CoA before the citrate synthase-like protein oryE catalyzes condensation with oxaloacetate to form tricarboxylic acid. The next steps of the pathways are conjectural, but a favorite possible route has been proposed, beginning with decarboxylation and concomitant dehydration by the decarboxylase oryM, followed by tautomerization, which may lead to the production of a diene intermediate. Reduction of this diene intermediate could give the known metabolite piliformic acid. On the pathway to oryzine B and oryzine A, however, hydroxylation of the diene by the alpha-ketoglutarate-dependent dioxygenase oryG and lactonisation by the lactonohydrolases oryH or oryL could give oryzine B directly. Finally, enoyl reduction by the dehydrogenase oryD would then convert oryzine B into oryzine A. The polypeptide is Ankyrin repeat domain-containing protein oryK (Aspergillus oryzae (strain ATCC 42149 / RIB 40) (Yellow koji mold)).